We begin with the raw amino-acid sequence, 313 residues long: Ribosomal RNA small subunit methyltransferase H (313 aa).

Residues 35–37, D55, F80, D102, and Q109 contribute to the S-adenosyl-L-methionine site; that span reads GGH.

Belongs to the methyltransferase superfamily. RsmH family.

It is found in the cytoplasm. The enzyme catalyses cytidine(1402) in 16S rRNA + S-adenosyl-L-methionine = N(4)-methylcytidine(1402) in 16S rRNA + S-adenosyl-L-homocysteine + H(+). In terms of biological role, specifically methylates the N4 position of cytidine in position 1402 (C1402) of 16S rRNA. In Shewanella putrefaciens (strain CN-32 / ATCC BAA-453), this protein is Ribosomal RNA small subunit methyltransferase H.